The primary structure comprises 403 residues: Phosphopentomutase (403 aa).

Mn(2+) contacts are provided by Asp-13, Asp-298, His-303, Asp-339, His-340, and His-351.

Belongs to the phosphopentomutase family. Mn(2+) serves as cofactor.

Its subcellular location is the cytoplasm. The catalysed reaction is 2-deoxy-alpha-D-ribose 1-phosphate = 2-deoxy-D-ribose 5-phosphate. It carries out the reaction alpha-D-ribose 1-phosphate = D-ribose 5-phosphate. It functions in the pathway carbohydrate degradation; 2-deoxy-D-ribose 1-phosphate degradation; D-glyceraldehyde 3-phosphate and acetaldehyde from 2-deoxy-alpha-D-ribose 1-phosphate: step 1/2. In terms of biological role, isomerase that catalyzes the conversion of deoxy-ribose 1-phosphate (dRib-1-P) and ribose 1-phosphate (Rib-1-P) to deoxy-ribose 5-phosphate (dRib-5-P) and ribose 5-phosphate (Rib-5-P), respectively. This chain is Phosphopentomutase, found in Streptococcus thermophilus.